The primary structure comprises 1294 residues: Voltage-gated inwardly rectifying potassium channel KCNH2 (1294 aa).

Topologically, residues 1–377 (RKFIIANARV…RIHRWTILHY (377 aa)) are cytoplasmic. The PAS domain occupies 15 to 44 (VIYCNDGFCELCGYSRAEVMQRPCTCDFLH). Positions 66-118 (RKVEIAFYRKDGSCFLCLVDVVPVKNEDGAVIMFILNFEVVMEKDMVGSPARD) constitute a PAC domain. A disordered region spans residues 207 to 258 (LVAPGSPPSSVPGPPHTSPRAHSLNPDASGSSCSLARTRSRESCASVRRASS). Residues 211-223 (GSPPSSVPGPPHT) are compositionally biased toward pro residues. A phosphoserine mark is found at Ser-212 and Ser-216. Residues 232-243 (PDASGSSCSLAR) show a composition bias toward polar residues. Ser-257, Ser-258, Ser-294, and Ser-325 each carry phosphoserine. A helical transmembrane segment spans residues 378–398 (SPFKAVWDWLILLLVIYTAVF). Residues 399-424 (TPYSAAFLLKEPEEDAQTADCGYACQ) are Extracellular-facing. The helical transmembrane segment at 425–445 (PLAVVDLIVDIMFIVDILINF) threads the bilayer. The Cytoplasmic segment spans residues 446–469 (RTTYVNANEEVVSHPGRIAVHYFK). A helical transmembrane segment spans residues 470–490 (GWFLIDMVAAIPFDLLIFGSG). Over 491 to 494 (SEEL) the chain is Extracellular. The helical; Voltage-sensor transmembrane segment at 495-515 (IGLLKTARLLRLVRVARKLDR) threads the bilayer. The Cytoplasmic portion of the chain corresponds to 516–521 (YSEYGA). The chain crosses the membrane as a helical span at residues 522–542 (AVLFLLMCTFALIAHWLACIW). Residues 543–585 (YAIGNMEQPDMNSRIGWLHNLGDQIGKPYNSSGLGGPSIKDKY) lie on the Extracellular side of the membrane. Positions 586-606 (VTALYFTFSSLTSVGFGNVSP) form an intramembrane region, pore-forming. The Selectivity filter motif lies at 598 to 603 (SVGFGN). Topologically, residues 607 to 612 (NTNSEK) are extracellular. The helical transmembrane segment at 613-633 (IFSICVMLIGSLMYASIFGNV) threads the bilayer. Topologically, residues 634-1294 (SAIIQRLYSG…IAHWLACIWY (661 aa)) are cytoplasmic. The cNMP-binding domain stretch occupies residues 716–816 (PFRGATKGCL…IHRDDLLEVL (101 aa)). The disordered stretch occupies residues 844–956 (GSPGSTELEG…LTEDGDKSDT (113 aa)). Phosphoserine is present on residues Ser-845 and Ser-848. A compositionally biased stretch (basic residues) spans 857–866 (RQRRRKLSFR). Residues 902–913 (GDSPSSGPSSPE) show a composition bias toward low complexity. At Arg-987 the chain carries Omega-N-methylarginine. Residues 1008–1035 (RGDVESRLDALQRQLNRLETRLSADMAT) are a coiled coil. A Phosphoserine modification is found at Ser-1110.

It belongs to the potassium channel family. H (Eag) (TC 1.A.1.20) subfamily. Kv11.1/KCNH2 sub-subfamily. In terms of assembly, the potassium channel is probably composed of a homo- or heterotetrameric complex of pore-forming alpha subunits that can associate with modulating beta subunits. Interacts with DNAJB12 and DNAJB14; chaperones DNAJB12 and DNAJB14 promote tetramerization. Heteromultimer with KCNH6/ERG2 and KCNH7/ERG3. Interacts with ALG10B. Forms a stable complex with KCNE1 or KCNE2, and that this heteromultimerization regulates Inward rectifier potassium channel activity. Interacts with CANX. The core-glycosylated, but not the fully glycosylated form interacts with RNF207. Interacts with NDFIP1 and NDFIP2; this interaction decreases the cell membrane expression by targeting KCNH2, through interaction with NEDD4L, for the degradation through the multivesicular bodies (MVBs)-lysosomal pathway. Post-translationally, phosphorylated on serine and threonine residues. Phosphorylation by PKA inhibits ion conduction. As to expression, highly expressed in heart and brain.

Its subcellular location is the cell membrane. It carries out the reaction K(+)(in) = K(+)(out). Its function is as follows. Pore-forming (alpha) subunit of voltage-gated inwardly rectifying potassium channel. Characterized by unusual gating kinetics by producing relatively small outward currents during membrane depolarization and large inward currents during subsequent repolarization which reflect a rapid inactivation during depolarization and quick recovery from inactivation but slow deactivation (closing) during repolarization. Channel properties are modulated by cAMP and subunit assembly. Forms a stable complex with KCNE1 or KCNE2, and that this heteromultimerization regulates inward rectifier potassium channel activity. This is Voltage-gated inwardly rectifying potassium channel KCNH2 from Cavia porcellus (Guinea pig).